Consider the following 134-residue polypeptide: Protein OPG030 (134 aa).

The BACK domain maps to 88–133 (YKENGLRNSFLRQYINNNIEEIRNTDQFLKFDVDSVCDILNNDETI).

This sequence belongs to the orthopoxvirus OPG030 family.

This Variola virus (isolate Human/India/Ind3/1967) (VARV) protein is Protein OPG030 (OPG30).